The following is a 329-amino-acid chain: N-acetyl-gamma-glutamyl-phosphate reductase (329 aa).

Residue C155 is part of the active site.

The protein belongs to the NAGSA dehydrogenase family. Type 1 subfamily.

The protein localises to the cytoplasm. The enzyme catalyses N-acetyl-L-glutamate 5-semialdehyde + phosphate + NADP(+) = N-acetyl-L-glutamyl 5-phosphate + NADPH + H(+). It functions in the pathway amino-acid biosynthesis; L-arginine biosynthesis; N(2)-acetyl-L-ornithine from L-glutamate: step 3/4. Functionally, catalyzes the NADPH-dependent reduction of N-acetyl-5-glutamyl phosphate to yield N-acetyl-L-glutamate 5-semialdehyde. The sequence is that of N-acetyl-gamma-glutamyl-phosphate reductase from Shewanella pealeana (strain ATCC 700345 / ANG-SQ1).